Here is a 413-residue protein sequence, read N- to C-terminus: Tyrosine--tRNA ligase (413 aa).

Position 34 (tyrosine 34) interacts with L-tyrosine. A 'HIGH' region motif is present at residues 39–48; the sequence is CTAQSLHVGN. L-tyrosine-binding residues include tyrosine 171 and glutamine 175. The 'KMSKS' region signature appears at 231–235; it reads KMGKT. Lysine 234 provides a ligand contact to ATP. The 66-residue stretch at 346 to 411 folds into the S4 RNA-binding domain; it reads IPITELLVTI…GKKCHILVKI (66 aa).

The protein belongs to the class-I aminoacyl-tRNA synthetase family. TyrS type 1 subfamily. In terms of assembly, homodimer.

It localises to the cytoplasm. It catalyses the reaction tRNA(Tyr) + L-tyrosine + ATP = L-tyrosyl-tRNA(Tyr) + AMP + diphosphate + H(+). Catalyzes the attachment of tyrosine to tRNA(Tyr) in a two-step reaction: tyrosine is first activated by ATP to form Tyr-AMP and then transferred to the acceptor end of tRNA(Tyr). In Orientia tsutsugamushi (strain Boryong) (Rickettsia tsutsugamushi), this protein is Tyrosine--tRNA ligase.